The primary structure comprises 131 residues: Small ribosomal subunit protein uS11 (131 aa).

This sequence belongs to the universal ribosomal protein uS11 family. In terms of assembly, part of the 30S ribosomal subunit. Interacts with proteins S7 and S18. Binds to IF-3.

Located on the platform of the 30S subunit, it bridges several disparate RNA helices of the 16S rRNA. Forms part of the Shine-Dalgarno cleft in the 70S ribosome. This is Small ribosomal subunit protein uS11 from Pelobacter propionicus (strain DSM 2379 / NBRC 103807 / OttBd1).